We begin with the raw amino-acid sequence, 157 residues long: Crossover junction endodeoxyribonuclease RuvC (157 aa).

Active-site residues include aspartate 7, glutamate 67, and aspartate 140. Mg(2+)-binding residues include aspartate 7, glutamate 67, and aspartate 140.

Belongs to the RuvC family. Homodimer which binds Holliday junction (HJ) DNA. The HJ becomes 2-fold symmetrical on binding to RuvC with unstacked arms; it has a different conformation from HJ DNA in complex with RuvA. In the full resolvosome a probable DNA-RuvA(4)-RuvB(12)-RuvC(2) complex forms which resolves the HJ. Requires Mg(2+) as cofactor.

Its subcellular location is the cytoplasm. It catalyses the reaction Endonucleolytic cleavage at a junction such as a reciprocal single-stranded crossover between two homologous DNA duplexes (Holliday junction).. The RuvA-RuvB-RuvC complex processes Holliday junction (HJ) DNA during genetic recombination and DNA repair. Endonuclease that resolves HJ intermediates. Cleaves cruciform DNA by making single-stranded nicks across the HJ at symmetrical positions within the homologous arms, yielding a 5'-phosphate and a 3'-hydroxyl group; requires a central core of homology in the junction. The consensus cleavage sequence is 5'-(A/T)TT(C/G)-3'. Cleavage occurs on the 3'-side of the TT dinucleotide at the point of strand exchange. HJ branch migration catalyzed by RuvA-RuvB allows RuvC to scan DNA until it finds its consensus sequence, where it cleaves and resolves the cruciform DNA. The polypeptide is Crossover junction endodeoxyribonuclease RuvC (Rickettsia bellii (strain OSU 85-389)).